A 573-amino-acid polypeptide reads, in one-letter code: Leucine aminopeptidase, chloroplastic (573 aa).

The N-terminal 53 residues, 1–53 (MATLRVSSLLASSPSSLHCNPSVFTKCQSSPRWAFSFSVTPLCSRRSKRIVHC), are a transit peptide targeting the chloroplast. Mn(2+) contacts are provided by K342 and D347. K354 is an active-site residue. Mn(2+) is bound by residues D367, D427, and E429. Residue R431 is part of the active site.

Belongs to the peptidase M17 family. In terms of assembly, homohexamer (dimer of homotrimers). Mn(2+) is required as a cofactor. In tubers and floral buds of untreated plants. After abscisic acid (ABA) treatment or mechanical wounding is mostly accumulated in leaves, to a lesser extent in stems, but not in roots.

It localises to the plastid. The protein resides in the chloroplast. The enzyme catalyses Release of an N-terminal amino acid, Xaa-|-Yaa-, in which Xaa is preferably Leu, but may be other amino acids including Pro although not Arg or Lys, and Yaa may be Pro. Amino acid amides and methyl esters are also readily hydrolyzed, but rates on arylamides are exceedingly low.. It catalyses the reaction Release of N-terminal proline from a peptide.. Presumably involved in the processing and regular turnover of intracellular proteins. The protein is Leucine aminopeptidase, chloroplastic (LAP) of Solanum tuberosum (Potato).